Here is a 573-residue protein sequence, read N- to C-terminus: uncharacterized protein (573 aa).

Positions 15–298 (AGIALILMLT…FPFLIMIFTR (284 aa)) constitute an ABC transmembrane type-1 domain. The next 6 membrane-spanning stretches (helical) occupy residues 17–37 (IALI…LLIA), 52–72 (VWIW…AGML), 127–147 (IFMS…GIVL), 153–173 (VKLG…LLWV), 238–258 (FTMP…LWAG), and 275–295 (IINY…LIMI). Residues 330-563 (IEFQHVSFRY…SQLYKRIYES (234 aa)) form the ABC transporter domain. ATP is bound at residue 364 to 371 (GATGSGKS).

This sequence belongs to the ABC transporter superfamily.

It is found in the cell membrane. This is an uncharacterized protein from Bacillus subtilis (strain 168).